A 396-amino-acid polypeptide reads, in one-letter code: Succinyl-CoA:mesaconate CoA-transferase (396 aa).

Catalysis depends on aspartate 175, which acts as the Nucleophile.

Belongs to the CoA-transferase III family. In terms of assembly, homodimer.

The enzyme catalyses mesaconate + succinyl-CoA = 2-methylfumaryl-CoA + succinate. Shows highest activity at 4 M KCl. Does not require divalent ions for activity. Involved in the methylaspartate cycle. Catalyzes the transfer of the CoA moiety from succinyl-CoA to mesaconate to generate mesaconyl-CoA (2-methylfumaryl-CoA) and succinate. Also shows high activity with methylsuccinate as CoA-acceptor, and only low activity with glutarate, acrylate and itaconate. Cannot use other CoA donors like acetyl-CoA, propionyl-CoA, butyryl-CoA or acetoacetyl-CoA. This Haloarcula hispanica (strain ATCC 33960 / DSM 4426 / JCM 8911 / NBRC 102182 / NCIMB 2187 / VKM B-1755) protein is Succinyl-CoA:mesaconate CoA-transferase.